The following is a 472-amino-acid chain: Guanine nucleotide-binding protein alpha-1 subunit (472 aa).

A lipid anchor (N-myristoyl glycine) is attached at glycine 2. Cysteine 3 carries S-palmitoyl cysteine lipidation. The G-alpha domain occupies 40–472 (NEIKLLLLGA…QQNLKKIGII (433 aa)). Residues 43–56 (KLLLLGAGESGKST) form a G1 motif region. Glutamate 51, serine 52, glycine 53, lysine 54, serine 55, and threonine 56 together coordinate GTP. Serine 55 provides a ligand contact to Mg(2+). Residues 127–235 (LDYINASVAG…REIQGQNRRN (109 aa)) form an insert; not present in other G-proteins region. Residues 162–199 (GRAKAAFDEDGNISNVKSDTDRDAETVTQNEDADRNNS) form a disordered region. Residue lysine 165 forms a Glycyl lysine isopeptide (Lys-Gly) (interchain with G-Cter in ubiquitin) linkage. The G2 motif stretch occupies residues 292 to 300 (DILKGRIKT). The GTP site is built by leucine 294, threonine 300, glycine 322, asparagine 388, lysine 389, aspartate 391, and alanine 444. Threonine 300 is a Mg(2+) binding site. Residues 315–324 (FKVLDAGGQR) are G3 motif. The segment at 384–391 (ILFLNKID) is G4 motif. Residues 442-447 (TCATDT) are G5 motif.

This sequence belongs to the G-alpha family. G(q) subfamily. G proteins are composed of 3 units; alpha, beta and gamma. The alpha chain contains the guanine nucleotide binding site. In its GDP-bound form, binds to the G protein beta-gamma dimer STE4-STE18. Directly interacts with the beta subunit STE4. Probably forms preactivation complexes with unligated receptors STE2 and STE3. Interacts with FUS3. Pheromone-induced activation of GPA1 increases its association with FUS3. Interacts with SCP160. SCP160 binds specifically to the GTP-bound form of GPA1. Interacts with the phosphatidylinositol 3-kinase (PI3K) subunits VPS15 and VPS34 at the endosome. The GTP-bound form of GPA1 binds directly and selectively to the catalytic subunit VPS34, while the GDP-bound form binds to VPS15, which appears to function as an alternative G protein beta subunit for GPA1. Interacts with regulators of G protein signaling (RGS) proteins MDM1, RAX1, RGS2 and SST2, but SST2 alone binds preferentially to the transition state conformation of GPA1, indicating that it acts as a GAP for this G protein. The cofactor is Mg(2+). In terms of processing, N-myristoylation by NMT1 is pheromone-stimulated and required for palmitoylation of Cys-3. This lipid modification anchors the protein to membranes. Depalmitoylated by YLR118C/APT1. Post-translationally, monoubiquitination targets the protein for degradation to the vacuole, and polyubiquitination tags the protein for degradation by the proteasome. This may be an additional signaling regulation mechanism.

Its subcellular location is the cell membrane. The protein resides in the endosome membrane. With respect to regulation, alternates between an inactive form bound to GDP and an active form bound to GTP. Activated by the G protein coupled receptors (GPCRs) STE2 and STE3, which serve as guanine nucleotide-exchange factors (GEFs), and inactivated by SST2, probably acting as a GTPase-activating protein (GAP). Its function is as follows. Alpha subunit of the heterotrimeric guanine nucleotide-binding protein (G protein) that mediates mating pheromone signal transduction. Binding of alpha-factor or a-factor to its cognate transmembrane receptor STE2 and STE3, respectively, allows the receptor to serve as a guanine nucleotide exchange factor (GEF) on GPA1. The exchange of GDP for GTP on the G protein alpha subunit alters its interaction with the G protein beta subunit STE4, leading to dissociation of the G protein beta-gamma dimer STE4-STE18. The dissociated subunits activate downstream effectors to activate the mating response pathway and induce changes necessary to produce mating-competent cells. STE4-STE18 activate the downstream pheromone signaling MAP kinase cascade leading to expression of mating-specific genes, inducing cell cycle arrest in G1, promoting polarized cell growth to form mating projections (shmoos), and establishing the changes in plasma membrane, cell wall and nuclear envelope to permit cell-cell fusion (plasmogamy) and fusion of the two haploid nuclei (karyogamy). GPA1 transmits a signal that requires direct binding to the effector enzyme PI3K located at the endosome, promoting increased PI3 production. The intrinsic GTPase activity of GPA1 determines the duration of signaling, and is dramatically accelerated by the RGS protein SST2. In unstimulated cells, GDP-bound GPA1 sequesters the G protein beta-gamma subunit STE4-STE18, preventing it from activating the downstream effectors. Also down-regulates the signal by inhibiting the pheromone-induced accumulation of FUS3 in the nucleus. In Saccharomyces cerevisiae (strain ATCC 204508 / S288c) (Baker's yeast), this protein is Guanine nucleotide-binding protein alpha-1 subunit (GPA1).